Here is a 127-residue protein sequence, read N- to C-terminus: Ribosome-binding factor A (127 aa).

It belongs to the RbfA family. Monomer. Binds 30S ribosomal subunits, but not 50S ribosomal subunits or 70S ribosomes.

The protein localises to the cytoplasm. One of several proteins that assist in the late maturation steps of the functional core of the 30S ribosomal subunit. Associates with free 30S ribosomal subunits (but not with 30S subunits that are part of 70S ribosomes or polysomes). Required for efficient processing of 16S rRNA. May interact with the 5'-terminal helix region of 16S rRNA. The chain is Ribosome-binding factor A from Chloroflexus aggregans (strain MD-66 / DSM 9485).